A 44-amino-acid polypeptide reads, in one-letter code: Omega-plectoxin-Pt1a (44 aa).

5 disulfides stabilise this stretch: Cys3–Cys17, Cys10–Cys23, Cys16–Cys35, Cys20–Cys42, and Cys25–Cys33. Position 44 is a threonine amide (Thr44). Thr44 carries the O-palmitoyl threonine lipid modification.

The protein belongs to the neurotoxin 02 (plectoxin) family. 02 (plectoxin) subfamily. Contains 5 disulfide bonds. In terms of processing, acylation by palmitate is required for biological activity. Expressed by the venom gland.

The protein resides in the secreted. In terms of biological role, toxin that inhibits presynaptic voltage-gated calcium channel (Cav) in Drosophila nerve terminals, most likely through specific block of the Cav2 channel (known as Dmca1A). This is Omega-plectoxin-Pt1a from Plectreurys tristis (Spider).